An 87-amino-acid polypeptide reads, in one-letter code: Small ribosomal subunit protein uS15 (87 aa).

This sequence belongs to the universal ribosomal protein uS15 family. In terms of assembly, part of the 30S ribosomal subunit. Forms a bridge to the 50S subunit in the 70S ribosome, contacting the 23S rRNA.

Functionally, one of the primary rRNA binding proteins, it binds directly to 16S rRNA where it helps nucleate assembly of the platform of the 30S subunit by binding and bridging several RNA helices of the 16S rRNA. In terms of biological role, forms an intersubunit bridge (bridge B4) with the 23S rRNA of the 50S subunit in the ribosome. In Ruminiclostridium cellulolyticum (strain ATCC 35319 / DSM 5812 / JCM 6584 / H10) (Clostridium cellulolyticum), this protein is Small ribosomal subunit protein uS15.